The primary structure comprises 123 residues: Large ribosomal subunit protein eL8 (123 aa).

The protein belongs to the eukaryotic ribosomal protein eL8 family. As to quaternary structure, may be present in up to 3 copies per 70S ribosome. Part of the 50S ribosomal subunit, where it binds 23S rRNA at its canonical site near the L1 stalk, as well as a possible second 50S binding site near helix 25 and a possible third site on the beak of the 30S subunit. Component of box C/D small ribonucleoprotein (sRNP) particles that contain rpl7ae, FlpA and nop5, plus a guide RNA. These sRNP particles form homodimers, giving rise to an asymmetric holoenzyme. Probably part of the RNase P complex.

It localises to the cytoplasm. Functionally, multifunctional RNA-binding protein that recognizes the K-turn motif in ribosomal RNA, the RNA component of RNase P, box H/ACA, box C/D and box C'/D' sRNAs. Component of the 70S ribosome. Component of a box C/D small ribonucleoprotein (sRNP) particle that is involved in pre-rRNA and tRNA processing. Utilizes the methyl donor S-adenosyl-L-methionine to catalyze the site-specific 2'-hydroxyl methylation of ribose moieties in rRNA and tRNA. Site specificity is provided by a guide RNA that base pairs with the substrate. Methylation occurs at a characteristic distance from the sequence involved in base pairing with the guide RNA. This Pyrococcus furiosus (strain ATCC 43587 / DSM 3638 / JCM 8422 / Vc1) protein is Large ribosomal subunit protein eL8.